The following is a 134-amino-acid chain: Complexin-1 (134 aa).

Disordered regions lie at residues 1-60 (MEFV…AERE) and 74-113 (KKEE…EEED). Basic and acidic residues predominate over residues 15 to 60 (DMGKMLGGDEEKDPDAAKKEEERQEALRQAEEERKAKYAKMEAERE). Residues 29 to 69 (DAAKKEEERQEALRQAEEERKAKYAKMEAEREAVRQGIRDK) adopt a coiled-coil conformation. Positions 48 to 70 (RKAKYAKMEAEREAVRQGIRDKY) are interaction with the SNARE complex.

Belongs to the complexin/synaphin family. Binds to the SNARE core complex containing SNAP25, VAMP2 and STX1A. Nervous system. In hippocampus and cerebellum, expressed mainly by inhibitory neurons. Overexpressed in substantia nigra from patients with Parkinson disease.

It is found in the cytoplasm. The protein localises to the cytosol. The protein resides in the perikaryon. Its subcellular location is the presynapse. In terms of biological role, positively regulates a late step in exocytosis of various cytoplasmic vesicles, such as synaptic vesicles and other secretory vesicles. Organizes the SNAREs into a cross-linked zigzag topology that, when interposed between the vesicle and plasma membranes, is incompatible with fusion, thereby preventing SNAREs from releasing neurotransmitters until an action potential arrives at the synapse. Also involved in glucose-induced secretion of insulin by pancreatic beta-cells. Essential for motor behavior. In Homo sapiens (Human), this protein is Complexin-1 (CPLX1).